We begin with the raw amino-acid sequence, 155 residues long: uncharacterized protein (155 aa).

The tract at residues 56–79 (GEKRPTHRRPYRRTKPYPKRPSML) is disordered. Residues 60 to 73 (PTHRRPYRRTKPYP) are compositionally biased toward basic residues.

This is an uncharacterized protein from Sinorhizobium fredii (strain NBRC 101917 / NGR234).